Here is a 615-residue protein sequence, read N- to C-terminus: RUN domain-containing protein 1 (615 aa).

Residues 15–41 (TAVGPKAKDEEEEEEEEESLPPCETVR) form a disordered region. Residues 24–33 (EEEEEEEEES) show a composition bias toward acidic residues. Position 73 is a phosphoserine (Ser73). Coiled coils occupy residues 76–102 (DATVRTLRRLEAERRQLDSALLALSSH) and 163–238 (RVRG…NLNE). The interval 147 to 180 (DPCGGDESDVLPGDRPRVRGEDQSEQEKRERLET) is disordered. A compositionally biased stretch (basic and acidic residues) spans 158-180 (PGDRPRVRGEDQSEQEKRERLET). The 182-residue stretch at 423–604 (ELTTVVRKEL…LKFSLPVDLA (182 aa)) folds into the RUN domain. Ser499 bears the Phosphoserine mark.

May play a role as p53/TP53 inhibitor and thus may have oncogenic activity. This chain is RUN domain-containing protein 1 (Rundc1), found in Mus musculus (Mouse).